The following is a 138-amino-acid chain: 6,7-dimethyl-8-ribityllumazine synthase (138 aa).

Residues F13, 45–47 (VFD), and 69–71 (AVI) each bind 5-amino-6-(D-ribitylamino)uracil. 74 to 75 (AT) lines the (2S)-2-hydroxy-3-oxobutyl phosphate pocket. The active-site Proton donor is the H77. L102 lines the 5-amino-6-(D-ribitylamino)uracil pocket. (2S)-2-hydroxy-3-oxobutyl phosphate is bound at residue R117.

The protein belongs to the DMRL synthase family.

The enzyme catalyses (2S)-2-hydroxy-3-oxobutyl phosphate + 5-amino-6-(D-ribitylamino)uracil = 6,7-dimethyl-8-(1-D-ribityl)lumazine + phosphate + 2 H2O + H(+). The protein operates within cofactor biosynthesis; riboflavin biosynthesis; riboflavin from 2-hydroxy-3-oxobutyl phosphate and 5-amino-6-(D-ribitylamino)uracil: step 1/2. Functionally, catalyzes the formation of 6,7-dimethyl-8-ribityllumazine by condensation of 5-amino-6-(D-ribitylamino)uracil with 3,4-dihydroxy-2-butanone 4-phosphate. This is the penultimate step in the biosynthesis of riboflavin. This chain is 6,7-dimethyl-8-ribityllumazine synthase, found in Methanobrevibacter smithii (strain ATCC 35061 / DSM 861 / OCM 144 / PS).